Here is a 625-residue protein sequence, read N- to C-terminus: 1,4-alpha-glucan branching enzyme GlgB (625 aa).

The active-site Nucleophile is the aspartate 302. Catalysis depends on glutamate 355, which acts as the Proton donor.

This sequence belongs to the glycosyl hydrolase 13 family. GlgB subfamily. Monomer.

It catalyses the reaction Transfers a segment of a (1-&gt;4)-alpha-D-glucan chain to a primary hydroxy group in a similar glucan chain.. Its pathway is glycan biosynthesis; glycogen biosynthesis. Functionally, catalyzes the formation of the alpha-1,6-glucosidic linkages in glycogen by scission of a 1,4-alpha-linked oligosaccharide from growing alpha-1,4-glucan chains and the subsequent attachment of the oligosaccharide to the alpha-1,6 position. The sequence is that of 1,4-alpha-glucan branching enzyme GlgB from Albidiferax ferrireducens (strain ATCC BAA-621 / DSM 15236 / T118) (Rhodoferax ferrireducens).